A 489-amino-acid chain; its full sequence is MTFRNCVAVDLGASSGRVMLARYERECRSLTLREIHRFNNGLHSQNGYVTWDVDSLESAIRLGLNKVCEEGIRIDSIGIDTWGVDFVLLDQQGQRVGLPVAYRDSRTNGLMAQAQQQLGKRDIYQRSGIQFLPFNTIYQLRALTEQQPELIPHIAHALLMADYFSYRLTGEMNWEYTNATTTQLVNINSDDWDESLLAWSGANKAWFGRPTHPGNVIGHWICPQGNEIPVVAVASHDTASAVIASPLSGSRAAYLSSGTWSLMGFESQTPFTNDTALAANITNEGGAEGRYRVLKNIMGLWLLQRVLQERQINDLPALIAATQALPACRFTINPNDDRFINPDEMCSEIQAACRETAQPIPESDAELARCIFDSLALLYADVLHELAQLRGEDFSQLHIVGGGCQNALLNQLCADACGIRVIAGPVEASTLGNIGIQLMTLDELNNVDDFRQVVSTTANLTTFTPNPDSEIAHYVAQIHSTRQTKELCA.

Residue 13–17 (ASSGR) coordinates ATP. A disulfide bridge links cysteine 68 with cysteine 222. Residues glycine 83 and 236 to 238 (HDT) each bind substrate. Residue aspartate 237 is the Proton acceptor of the active site. Threonine 259 contacts ATP. Asparagine 296 contacts substrate. Glutamine 304 serves as a coordination point for ATP. Cysteine 353 and cysteine 370 form a disulfide bridge. Glycine 402 provides a ligand contact to ATP. An intrachain disulfide couples cysteine 413 to cysteine 417.

Belongs to the rhamnulokinase family. As to quaternary structure, monomer. Requires Mg(2+) as cofactor.

It catalyses the reaction L-rhamnulose + ATP = L-rhamnulose 1-phosphate + ADP + H(+). The protein operates within carbohydrate degradation; L-rhamnose degradation; glycerone phosphate from L-rhamnose: step 2/3. Its function is as follows. Involved in the catabolism of L-rhamnose (6-deoxy-L-mannose). Catalyzes the transfer of the gamma-phosphate group from ATP to the 1-hydroxyl group of L-rhamnulose to yield L-rhamnulose 1-phosphate. This chain is Rhamnulokinase, found in Escherichia coli O17:K52:H18 (strain UMN026 / ExPEC).